Consider the following 88-residue polypeptide: Probable small nuclear ribonucleoprotein F (88 aa).

Residues N7–D79 enclose the Sm domain.

It belongs to the snRNP Sm proteins family. SmF/LSm6 subfamily.

The protein resides in the nucleus. Probable common Sm protein, is found in U1 and U2 snRNPs and may be part of the spliceosome. The polypeptide is Probable small nuclear ribonucleoprotein F (Arabidopsis thaliana (Mouse-ear cress)).